A 308-amino-acid chain; its full sequence is Glutaminase (308 aa).

Residues Ser-66, Asn-117, Glu-162, Asn-169, Tyr-193, Tyr-244, and Val-262 each contribute to the substrate site.

Belongs to the glutaminase family. As to quaternary structure, homotetramer.

The enzyme catalyses L-glutamine + H2O = L-glutamate + NH4(+). The chain is Glutaminase from Natranaerobius thermophilus (strain ATCC BAA-1301 / DSM 18059 / JW/NM-WN-LF).